A 237-amino-acid polypeptide reads, in one-letter code: MDIKLKDFEGPLDLLLHLVSKYEVDIYDVPIVEVIEQYLAYLATLQAMKLEVAGEYMLMASQLMLIKSRKLLPTVVEDEPEADDPELELLSQLEEYAHFKAASQVLAKKHEVRAQYFSKPKVELVYEDVTLNQDKTIQDIFLAFSKIMAEKQEEIRRRHTTIARDDYKIEDMMLIIEEAFSAKNKLFLDELFSDAKDMNQVITLFLATLELIKIHRISVQQETIFGTITLRKEWTNE.

This sequence belongs to the ScpA family. In terms of assembly, component of a cohesin-like complex composed of ScpA, ScpB and the Smc homodimer, in which ScpA and ScpB bind to the head domain of Smc. The presence of the three proteins is required for the association of the complex with DNA.

It is found in the cytoplasm. Participates in chromosomal partition during cell division. May act via the formation of a condensin-like complex containing Smc and ScpB that pull DNA away from mid-cell into both cell halves. The polypeptide is Segregation and condensation protein A (Streptococcus thermophilus (strain ATCC BAA-250 / LMG 18311)).